We begin with the raw amino-acid sequence, 2472 residues long: Telomere-associated protein RIF1 (2472 aa).

Residues 1 to 25 (MTARGQSPLAPLLETLEDPSASHGG) are disordered. Serine 402 bears the Phosphoserine mark. Threonine 409 is modified (phosphothreonine). Phosphoserine occurs at positions 782, 979, and 1008. The residue at position 1047 (threonine 1047) is a Phosphothreonine. Residues 1145-1192 (LEKSSLSNNECGSLDKTSPEMSNSNNDERKKALISSRKTSTECASSTE) form a disordered region. Residues 1148–1169 (SSLSNNECGSLDKTSPEMSNSN) are compositionally biased toward polar residues. Serine 1162 carries the phosphoserine modification. A Phosphothreonine modification is found at threonine 1220. Phosphoserine occurs at positions 1236 and 1238. Composition is skewed to basic and acidic residues over residues 1265 to 1279 (AKQR…DSEK) and 1306 to 1315 (MRSEPEKNTE). 3 disordered regions span residues 1265–1318 (AKQR…EESV), 1398–1464 (MVNE…DVLP), and 1479–1587 (IEKG…DQEE). Positions 1400-1412 (NEDSQVQITPNQK) are enriched in polar residues. Serine 1422, serine 1454, and serine 1513 each carry phosphoserine. 2 stretches are compositionally biased toward basic and acidic residues: residues 1431 to 1464 (SQDK…DVLP) and 1500 to 1530 (EQNK…EKLV). Threonine 1518 bears the Phosphothreonine mark. Phosphoserine occurs at positions 1542, 1552, 1554, 1556, and 1564. Over residues 1565-1574 (RKKRSGKWKN) the composition is skewed to basic residues. Phosphoserine occurs at positions 1576, 1579, 1613, 1616, 1688, 1693, 1706, and 1709. The segment at 1762–1782 (TKKADVQAPVSPSETSQANPY) is disordered. The span at 1771 to 1782 (VSPSETSQANPY) shows a compositional bias: polar residues. Threonine 1806 is subject to Phosphothreonine. Serine 1810 carries the post-translational modification Phosphoserine. A compositionally biased stretch (polar residues) spans 1846–1859 (AMSLESQESPNENF). The segment at 1846-1889 (AMSLESQESPNENFKTVGPCLGDSKNVSQESLETKEEKPEETPK) is disordered. Serine 1873 and serine 1876 each carry phosphoserine. A compositionally biased stretch (basic and acidic residues) spans 1877 to 1889 (LETKEEKPEETPK). An interaction with condensed chromosomes in telophase region spans residues 1924–2472 (EASFHGQERT…WRSPSHENSI (549 aa)). Phosphoserine occurs at positions 1926 and 1971. Residues 1992-2021 (EQTAAGELDGGNDVSDLHSSEETNTKMKNN) are disordered. Positions 2006–2021 (SDLHSSEETNTKMKNN) are enriched in basic and acidic residues. A phosphoserine mark is found at serine 2144 and serine 2161. Position 2167 is a phosphothreonine (threonine 2167). The segment at 2170 to 2446 (VWSPLASPST…SGSQLFEMHE (277 aa)) is interaction with ERCC6. Residues serine 2172, serine 2176, serine 2195, serine 2196, and serine 2205 each carry the phosphoserine modification. The segment covering 2227–2255 (RSHSSNSSPIGKSVKTSPTTQSKHNTTSA) has biased composition (polar residues). Residues 2227–2269 (RSHSSNSSPIGKSVKTSPTTQSKHNTTSAKGFLSPGSRSPKFK) form a disordered region. A phosphoserine mark is found at serine 2260, serine 2339, serine 2391, serine 2393, serine 2465, and serine 2471.

Belongs to the RIF1 family. As to quaternary structure, interacts with TP53BP1 (when phosphorylated by ATM). May interact with TRF2. Interacts with SHLD2. Interacts with ERCC6 (via WHD region). Interacts with ASTE1. As to expression, highly expressed in testis.

Its subcellular location is the nucleus. It is found in the chromosome. The protein localises to the telomere. The protein resides in the cytoplasm. It localises to the cytoskeleton. Its subcellular location is the spindle. Key regulator of TP53BP1 that plays a key role in the repair of double-strand DNA breaks (DSBs) in response to DNA damage: acts by promoting non-homologous end joining (NHEJ)-mediated repair of DSBs. In response to DNA damage, interacts with ATM-phosphorylated TP53BP1. Interaction with TP53BP1 leads to dissociate the interaction between NUDT16L1/TIRR and TP53BP1, thereby unmasking the tandem Tudor-like domain of TP53BP1 and allowing recruitment to DNA DSBs. Once recruited to DSBs, RIF1 and TP53BP1 act by promoting NHEJ-mediated repair of DSBs. In the same time, RIF1 and TP53BP1 specifically counteract the function of BRCA1 by blocking DSBs resection via homologous recombination (HR) during G1 phase. Also required for immunoglobulin class-switch recombination (CSR) during antibody genesis, a process that involves the generation of DNA DSBs. Promotes NHEJ of dysfunctional telomeres. This chain is Telomere-associated protein RIF1, found in Homo sapiens (Human).